Consider the following 39-residue polypeptide: Photosystem II reaction center protein L (39 aa).

A helical transmembrane segment spans residues 18-38 (SLYLGLLLVFVTAVLFTSYFF).

Belongs to the PsbL family. PSII is composed of 1 copy each of membrane proteins PsbA, PsbB, PsbC, PsbD, PsbE, PsbF, PsbH, PsbI, PsbJ, PsbK, PsbL, PsbM, PsbT, PsbX, PsbY, Psb30/Ycf12, peripheral proteins PsbO, CyanoQ (PsbQ), PsbU, PsbV and a large number of cofactors. It forms dimeric complexes.

The protein resides in the cellular thylakoid membrane. Its function is as follows. One of the components of the core complex of photosystem II (PSII). PSII is a light-driven water:plastoquinone oxidoreductase that uses light energy to abstract electrons from H(2)O, generating O(2) and a proton gradient subsequently used for ATP formation. It consists of a core antenna complex that captures photons, and an electron transfer chain that converts photonic excitation into a charge separation. This subunit is found at the monomer-monomer interface and is required for correct PSII assembly and/or dimerization. This is Photosystem II reaction center protein L from Prochlorococcus marinus (strain MIT 9313).